Consider the following 1272-residue polypeptide: CST complex subunit CTC1 (1272 aa).

It belongs to the CTC1 family. As to quaternary structure, component of the CST complex, composed of CTC1, TEN1 and STN1. Interacts with POT1A.

The protein localises to the nucleus. It is found in the chromosome. It localises to the telomere. Its function is as follows. Component of the CST complex, a complex that binds to single-stranded DNA and is required to protect telomeres from DNA degradation. The CST complex binds single-stranded DNA with high affinity in a sequence-independent manner, while isolated subunits bind DNA with low affinity by themselves. Associates with enzymatically active telomerase. In Arabidopsis thaliana (Mouse-ear cress), this protein is CST complex subunit CTC1.